We begin with the raw amino-acid sequence, 370 residues long: Translocating chain-associated membrane protein 2 (370 aa).

Residues 1-22 (MAFRRRTKSYPLFSQEFIIHNH) are Cytoplasmic-facing. A helical membrane pass occupies residues 23-43 (ADIGFCLVLCVLIGLMFEVTA). The Extracellular portion of the chain corresponds to 44–75 (KTAFLFILPQYNISVPTADSETVHYHYGPKDL). An N-linked (GlcNAc...) asparagine glycan is attached at Asn-55. The helical transmembrane segment at 76-96 (VTILFYVVITIIFHAVVQEYI) threads the bilayer. Residues 97–119 (LDKISKRLHLSKVKHSKFNESGQ) lie on the Cytoplasmic side of the membrane. Residues 112 to 321 (SKFNESGQLL…HSQLRHWREY (210 aa)) form the TLC domain. Residues 120–140 (LLVFHLSAVAWCFYVIVTEGY) form a helical membrane-spanning segment. Topologically, residues 141–159 (LTNPRSLWEDYPHVYLSFQ) are extracellular. A helical membrane pass occupies residues 160–180 (VKFFYLGQLAYWLHSLPELYF). Residues 181 to 191 (QKVRKEEVPRQ) lie on the Cytoplasmic side of the membrane. A helical transmembrane segment spans residues 192–209 (LQYICLYLLHITGAYLLN). Residues 210–214 (LSRLG) lie on the Extracellular side of the membrane. Residues 215–235 (LILLLLQYSTEALFHMARLFH) traverse the membrane as a helical segment. The Cytoplasmic portion of the chain corresponds to 236–250 (FADENNERLFNAWAA). A helical membrane pass occupies residues 251-271 (VFGVTRLFILTLAVLTIGFGL). Topologically, residues 272–287 (ARVENQVFDPEKGNFN) are extracellular. A helical transmembrane segment spans residues 288 to 308 (TLPCRLGMLLLVCVAQAWLMW). The Cytoplasmic segment spans residues 309-370 (RFIHSQLRHW…SSRTKKLKSP (62 aa)). A disordered region spans residues 332–370 (SAVPRPPAKLLKREPGYHENGVVKAENGTSSRTKKLKSP).

It belongs to the TRAM family. In terms of assembly, interacts with COL1A1. Interacts with SERCA2B.

The protein resides in the membrane. In terms of biological role, necessary for collagen type I synthesis. May couple the activity of the ER Ca(2+) pump SERCA2B with the activity of the translocon. This coupling may increase the local Ca(2+) concentration at the site of collagen synthesis, and a high Ca(2+) concentration may be necessary for the function of molecular chaperones involved in collagen folding. Required for proper insertion of the first transmembrane helix N-terminus of TM4SF20 into the ER lumen, may act as a ceramide sensor for regulated alternative translocation (RAT). The polypeptide is Translocating chain-associated membrane protein 2 (Tram2) (Mus musculus (Mouse)).